Consider the following 104-residue polypeptide: Protein RnfH (104 aa).

The tract at residues 80 to 104 is disordered; that stretch reads PLTADPKLNRKRRAKEKASAGKASN.

Belongs to the UPF0125 (RnfH) family.

The protein is Protein RnfH of Alcanivorax borkumensis (strain ATCC 700651 / DSM 11573 / NCIMB 13689 / SK2).